The chain runs to 76 residues: Exodeoxyribonuclease 7 small subunit (76 aa).

Belongs to the XseB family. As to quaternary structure, heterooligomer composed of large and small subunits.

It localises to the cytoplasm. The catalysed reaction is Exonucleolytic cleavage in either 5'- to 3'- or 3'- to 5'-direction to yield nucleoside 5'-phosphates.. Bidirectionally degrades single-stranded DNA into large acid-insoluble oligonucleotides, which are then degraded further into small acid-soluble oligonucleotides. In Legionella pneumophila (strain Paris), this protein is Exodeoxyribonuclease 7 small subunit.